The sequence spans 304 residues: Porphobilinogen deaminase (304 aa).

S-(dipyrrolylmethanemethyl)cysteine is present on C240.

This sequence belongs to the HMBS family. Monomer. Requires dipyrromethane as cofactor.

It carries out the reaction 4 porphobilinogen + H2O = hydroxymethylbilane + 4 NH4(+). It functions in the pathway porphyrin-containing compound metabolism; protoporphyrin-IX biosynthesis; coproporphyrinogen-III from 5-aminolevulinate: step 2/4. Its function is as follows. Tetrapolymerization of the monopyrrole PBG into the hydroxymethylbilane pre-uroporphyrinogen in several discrete steps. The chain is Porphobilinogen deaminase from Xanthomonas axonopodis pv. citri (strain 306).